A 113-amino-acid chain; its full sequence is Large ribosomal subunit protein bL19 (113 aa).

The protein belongs to the bacterial ribosomal protein bL19 family.

Its function is as follows. This protein is located at the 30S-50S ribosomal subunit interface and may play a role in the structure and function of the aminoacyl-tRNA binding site. The sequence is that of Large ribosomal subunit protein bL19 from Mycobacterium sp. (strain JLS).